Reading from the N-terminus, the 1089-residue chain is PALM2-AKAP2 fusion protein (1089 aa).

Residues 70–107 (SEEDEFKVKQLEDNIQRLEQEIQALESEESQISAKEQI) are a coiled coil. Disordered stretches follow at residues 165–194 (SEDANQLRSKQDNCGDSRLEPAASSLSPDH), 210–231 (PGVTSTPHSKDHSSPFYSPSHN), and 289–362 (PAHS…SRDG). The segment covering 173–183 (SKQDNCGDSRL) has biased composition (basic and acidic residues). 2 positions are modified to phosphoserine: Arg315 and Ser318. Positions 317-328 (PSDRMAEGERAN) are enriched in basic and acidic residues. The span at 329–347 (GHSTDQPQDLLGNSLQAPA) shows a compositional bias: polar residues. Ser348 carries the post-translational modification Phosphoserine. A compositionally biased stretch (low complexity) spans 348–357 (SPSSSTSSHC). A Glycyl lysine isopeptide (Lys-Gly) (interchain with G-Cter in SUMO1); alternate cross-link involves residue Lys370. Residue Lys370 forms a Glycyl lysine isopeptide (Lys-Gly) (interchain with G-Cter in SUMO2); alternate linkage. Positions 429–517 (KNPGIAAKWW…LSTSQPCTAP (89 aa)) are disordered. The segment covering 455 to 470 (LESHRKYKERKEKRAQ) has biased composition (basic and acidic residues). Residues 471–508 (QEQLQLQQQQQQQLQQQQLQQQQLQQQQLQQQLQQQQL) are compositionally biased toward low complexity. The residue at position 553 (Ser553) is a Phosphoserine. The disordered stretch occupies residues 592–644 (TVGGTLEDGGTQAAKEQKAPCVSESQSAGAGPANAATQGKEGPYSEPSKRGPL). Ser678, Ser682, and Ser734 each carry phosphoserine. Residues 712 to 749 (FSMDNISDSGASNETPSALQENSLADFSLPQTPQTDNP) show a composition bias toward polar residues. 3 disordered regions span residues 712–783 (FSMD…DPLE), 800–899 (EQVD…YFSK), and 915–934 (TQESDVMVGPFKLRSRKQRT). The residue at position 743 (Thr743) is a Phosphothreonine. Residues 782–795 (LEYQAGLLVQNAIQ) are PKA-RII subunit binding domain. The segment covering 801–814 (QVDKAEAHTSKEGS) has biased composition (basic and acidic residues). Ser847 bears the Phosphoserine mark. The span at 850-871 (QEKRDILPKNLPAEDRALREKG) shows a compositional bias: basic and acidic residues. The stretch at 928–958 (RSRKQRTLSMIEEEIRAAQEREEELKRQRQV) forms a coiled coil. Ser936, Ser964, Ser995, and Ser1002 each carry phosphoserine. A disordered region spans residues 946–1021 (QEREEELKRQ…AAGTQRPKNL (76 aa)).

Highly expressed in lung and weakly in thymus and cerebellum. Little or no expression in liver, heart and cerebral cortex. All isoforms are expressed in lung, but KL2A and KL2B isoforms are the principal isoforms in cerebellum.

It is found in the apical cell membrane. Functionally, binds to regulatory subunit (RII) of protein kinase A. May be involved in establishing polarity in signaling systems or in integrating PKA-RII isoforms with downstream effectors to capture, amplify and focus diffuse, trans-cellular signals carried by cAMP. Binds tp and modulates the structure of the actin cytoskeleton. The sequence is that of PALM2-AKAP2 fusion protein from Mus musculus (Mouse).